The sequence spans 140 residues: Tumor protein D55 (140 aa).

The disordered stretch occupies residues 1–28 (MPHARTETSVGTYESHSTSELEDLTEPE). Residues 7-18 (ETSVGTYESHST) are compositionally biased toward polar residues. The stretch at 28 to 57 (EQRELKTKLTKLEAEIVTLRHVLAAKERRC) forms a coiled coil.

This sequence belongs to the TPD52 family. Interacts with TPD52L2. In terms of tissue distribution, specifically expressed in testis. Expressed at 5.6-fold higher levels in adult testis than in fetal testis.

The polypeptide is Tumor protein D55 (TPD52L3) (Homo sapiens (Human)).